Reading from the N-terminus, the 467-residue chain is ATP synthase subunit beta (467 aa).

Residue 150 to 157 (GGAGVGKT) participates in ATP binding.

It belongs to the ATPase alpha/beta chains family. In terms of assembly, F-type ATPases have 2 components, CF(1) - the catalytic core - and CF(0) - the membrane proton channel. CF(1) has five subunits: alpha(3), beta(3), gamma(1), delta(1), epsilon(1). CF(0) has three main subunits: a(1), b(2) and c(9-12). The alpha and beta chains form an alternating ring which encloses part of the gamma chain. CF(1) is attached to CF(0) by a central stalk formed by the gamma and epsilon chains, while a peripheral stalk is formed by the delta and b chains.

It is found in the cell inner membrane. The catalysed reaction is ATP + H2O + 4 H(+)(in) = ADP + phosphate + 5 H(+)(out). In terms of biological role, produces ATP from ADP in the presence of a proton gradient across the membrane. The catalytic sites are hosted primarily by the beta subunits. The chain is ATP synthase subunit beta from Vibrio vulnificus (strain YJ016).